The chain runs to 310 residues: MSKIIFMGTPDFSTKILEMLIAEHEVIAVVTQPDRPVGRKKVMTPPPVKRVATKHQIPVYQPEKLKDSQELESLLSLESDLIVTAAFGQLLPESLLNAPKLGAINVHASLLPKYRGGAPIHQAIIDGEEETGITIMYMVKKLDAGNIISQQSIRIEEEDNVGTMHDKLSFLGAELLKKTLPSIIDNTNDSIPQDDALATFASNIRREDERVDWNMSAQAIHNHIRGLSPWPVAYTTMNEKNLKLFSAFIVKGKKGNPGTIIETTKHELIIATGSDDAIALTEIQPAGKKRMKVTDYLSGVQESLVGKVLL.

Position 109-112 (109-112 (SLLP)) interacts with (6S)-5,6,7,8-tetrahydrofolate.

It belongs to the Fmt family.

The catalysed reaction is L-methionyl-tRNA(fMet) + (6R)-10-formyltetrahydrofolate = N-formyl-L-methionyl-tRNA(fMet) + (6S)-5,6,7,8-tetrahydrofolate + H(+). In terms of biological role, attaches a formyl group to the free amino group of methionyl-tRNA(fMet). The formyl group appears to play a dual role in the initiator identity of N-formylmethionyl-tRNA by promoting its recognition by IF2 and preventing the misappropriation of this tRNA by the elongation apparatus. The sequence is that of Methionyl-tRNA formyltransferase from Staphylococcus epidermidis (strain ATCC 12228 / FDA PCI 1200).